Here is a 281-residue protein sequence, read N- to C-terminus: Energy-coupling factor transporter ATP-binding protein EcfA2 (281 aa).

An ABC transporter domain is found at 3–242; the sequence is IKVTGLTYVY…TETLEEIGLA (240 aa). 40-47 is an ATP binding site; it reads GHTGSGKS.

This sequence belongs to the ABC transporter superfamily. Energy-coupling factor EcfA family. Forms a stable energy-coupling factor (ECF) transporter complex composed of 2 membrane-embedded substrate-binding proteins (S component), 2 ATP-binding proteins (A component) and 2 transmembrane proteins (T component).

Its subcellular location is the cell membrane. Functionally, ATP-binding (A) component of a common energy-coupling factor (ECF) ABC-transporter complex. Unlike classic ABC transporters this ECF transporter provides the energy necessary to transport a number of different substrates. This chain is Energy-coupling factor transporter ATP-binding protein EcfA2, found in Acetivibrio thermocellus (strain ATCC 27405 / DSM 1237 / JCM 9322 / NBRC 103400 / NCIMB 10682 / NRRL B-4536 / VPI 7372) (Clostridium thermocellum).